A 164-amino-acid polypeptide reads, in one-letter code: Protein eva-1 homolog B (164 aa).

Residues 29–49 (GLYFVLGVCFGLLLTLCLLVI) form a helical membrane-spanning segment. The segment at 56-110 (RSRPRTPAPRRDPRSSTLEPEDEDDEEDEDTMTRLGPDDTLQGQELSTEPDGPLS) is disordered. A compositionally biased stretch (acidic residues) spans 74–85 (EPEDEDDEEDED). A phosphothreonine mark is found at T86, T149, and T157.

It belongs to the EVA1 family.

It localises to the membrane. The polypeptide is Protein eva-1 homolog B (Eva1b) (Mus musculus (Mouse)).